Reading from the N-terminus, the 168-residue chain is Cilia- and flagella-associated protein 276 (168 aa).

2 disordered regions span residues 35–61 (AHLA…RDTF) and 149–168 (HTAA…FFST). Residues 38–55 (AQQQDPWSRLSSTPTATS) show a composition bias toward polar residues.

As to quaternary structure, microtubule inner protein component of sperm flagellar doublet microtubules. Predominantly expressed in nervous system tissues, such as the spinal cord, cerebrum, cerebellum, and sciatic nerve.

The protein resides in the cytoplasm. The protein localises to the cytoskeleton. It localises to the cilium axoneme. It is found in the flagellum axoneme. Its function is as follows. Microtubule inner protein (MIP) part of the dynein-decorated doublet microtubules (DMTs) in cilia axoneme, which is required for motile cilia beating. May play an important role for the maintenance of myelin-axon integrity. May affect intracellular Ca(2+) homeostasis. In Mus musculus (Mouse), this protein is Cilia- and flagella-associated protein 276.